A 60-amino-acid chain; its full sequence is Cytotoxin 2 (60 aa).

4 disulfide bridges follow: C3-C21, C14-C38, C42-C53, and C54-C59.

The protein belongs to the three-finger toxin family. Short-chain subfamily. Type IA cytotoxin sub-subfamily. As to quaternary structure, monomer in solution; Homodimer and oligomer in the presence of negatively charged lipids forming a pore with a size ranging between 20 and 30 Angstroms. As to expression, expressed by the venom gland.

Its subcellular location is the secreted. It is found in the target cell membrane. In terms of biological role, shows cytolytic activity on many different cells by forming pore in lipid membranes. In vivo, increases heart rate or kills the animal by cardiac arrest. In addition, it binds to heparin with high affinity, interacts with Kv channel-interacting protein 1 (KCNIP1) in a calcium-independent manner, and binds to integrin alpha-V/beta-3 (ITGAV/ITGB3) with moderate affinity. The protein is Cytotoxin 2 of Naja annulifera (Banded Egyptian cobra).